The chain runs to 362 residues: Phospho-2-dehydro-3-deoxyheptonate aldolase (362 aa).

The protein belongs to the class-I DAHP synthase family.

The enzyme catalyses D-erythrose 4-phosphate + phosphoenolpyruvate + H2O = 7-phospho-2-dehydro-3-deoxy-D-arabino-heptonate + phosphate. It functions in the pathway metabolic intermediate biosynthesis; chorismate biosynthesis; chorismate from D-erythrose 4-phosphate and phosphoenolpyruvate: step 1/7. In terms of biological role, stereospecific condensation of phosphoenolpyruvate (PEP) and D-erythrose-4-phosphate (E4P) giving rise to 3-deoxy-D-arabino-heptulosonate-7-phosphate (DAHP). This Haemophilus influenzae (strain ATCC 51907 / DSM 11121 / KW20 / Rd) protein is Phospho-2-dehydro-3-deoxyheptonate aldolase (aroG).